The following is a 187-amino-acid chain: Resolvase OPG149 (187 aa).

The protein belongs to the RuvC family. Poxviruses-type subfamily. Mg(2+) serves as cofactor.

Plays a role in DNA replication by cleaving viral DNA concatamers to yield unit-length viral genomes. The concatamer junctions contain inverted repeat sequences that can be extruded as cruciforms, yielding Holliday junctions that A22 protein cleaves. The chain is Resolvase OPG149 (OPG149) from Cynomys gunnisoni (Gunnison's prairie dog).